Consider the following 162-residue polypeptide: GTP-dependent dephospho-CoA kinase (162 aa).

6 residues coordinate GTP: Asp-40, Val-41, Val-42, Asp-59, Lys-61, and Glu-111.

It belongs to the GTP-dependent DPCK family.

It catalyses the reaction 3'-dephospho-CoA + GTP = GDP + CoA + H(+). The protein operates within cofactor biosynthesis; coenzyme A biosynthesis. Catalyzes the GTP-dependent phosphorylation of the 3'-hydroxyl group of dephosphocoenzyme A to form coenzyme A (CoA). The chain is GTP-dependent dephospho-CoA kinase from Sulfurisphaera tokodaii (strain DSM 16993 / JCM 10545 / NBRC 100140 / 7) (Sulfolobus tokodaii).